The sequence spans 226 residues: Sugar fermentation stimulation protein homolog (226 aa).

This sequence belongs to the SfsA family.

In Picrophilus torridus (strain ATCC 700027 / DSM 9790 / JCM 10055 / NBRC 100828 / KAW 2/3), this protein is Sugar fermentation stimulation protein homolog.